Here is a 398-residue protein sequence, read N- to C-terminus: Alpha-monoglucosyldiacylglycerol synthase (398 aa).

The protein belongs to the glycosyltransferase group 1 family. Glycosyltransferase 4 subfamily. The cofactor is Mg(2+).

It is found in the cell membrane. It catalyses the reaction a 1,2-diacyl-sn-glycerol + UDP-alpha-D-glucose = a 1,2-diacyl-3-O-(alpha-D-glucopyranosyl)-sn-glycerol + UDP + H(+). Its activity is regulated as follows. Activated by the negatively charged lipids phosphatidylglycerol (PG), cardiolipin (CL), dodecylphosphate-rac-glycerol (PDG), 1,2-dioleoyl-phosphatidylglycerol (DOPG) and phosphatidylserine (PS). Functionally, glucosyltransferase involved in the biosynthesis of the non-bilayer-prone membrane lipid alpha-monoglucosyldiacylglycerol. This is a major component for maintaining a certain anionic lipid surface charge density, for balancing the bilayer to non-bilayer phase equilibria and for keeping a constant lipid bilayer spontaneous curvature (curvature packing stress). Catalyzes the transfer of a glucosyl residue from UDP-Glc to diacylglycerol (DAG) acceptor to form the corresponding alpha-glucosyl-DAG (1,2-diacyl-3-O-(alpha-D-glucopyranosyl)-sn-glycerol). It can only use UDP-Glc as sugar donor and DAG is the preferred substrate. The polypeptide is Alpha-monoglucosyldiacylglycerol synthase (mgs) (Acholeplasma laidlawii).